The primary structure comprises 217 residues: MQIYLDTANLDEIRTAASWGVLSGVTTNPSLMAKEKGADFKATIQEIASLVDGPISAEATSLDADGMVREGREFATWHPNVVVKVPSTTEGLKAVSRLARDGIRCNVTLCFNAVQALMAARAGAFIISPFVGRVDDVGVDGMSLIREIVQIYRAHNISTLVLAASIRHPRHIVEAALAGADIATCPFKVLEQSMRHPLTDIGIERFLADWKAWQQGR.

Lys84 functions as the Schiff-base intermediate with substrate in the catalytic mechanism.

It belongs to the transaldolase family. Type 3B subfamily.

It is found in the cytoplasm. The catalysed reaction is D-sedoheptulose 7-phosphate + D-glyceraldehyde 3-phosphate = D-erythrose 4-phosphate + beta-D-fructose 6-phosphate. It functions in the pathway carbohydrate degradation; pentose phosphate pathway; D-glyceraldehyde 3-phosphate and beta-D-fructose 6-phosphate from D-ribose 5-phosphate and D-xylulose 5-phosphate (non-oxidative stage): step 2/3. Transaldolase is important for the balance of metabolites in the pentose-phosphate pathway. In Roseiflexus castenholzii (strain DSM 13941 / HLO8), this protein is Probable transaldolase.